The primary structure comprises 122 residues: Small ribosomal subunit protein bS16 (122 aa).

The interval 81-122 (GLMKRDAKNNPKKGEPGEKAKERAKERAEKAAAGSTEDAAAE) is disordered. The span at 83 to 110 (MKRDAKNNPKKGEPGEKAKERAKERAEK) shows a compositional bias: basic and acidic residues. Positions 111-122 (AAAGSTEDAAAE) are enriched in low complexity.

Belongs to the bacterial ribosomal protein bS16 family.

This Xanthobacter autotrophicus (strain ATCC BAA-1158 / Py2) protein is Small ribosomal subunit protein bS16.